A 203-amino-acid polypeptide reads, in one-letter code: Glycerol-3-phosphate acyltransferase 1 (203 aa).

Transmembrane regions (helical) follow at residues 2 to 22, 52 to 72, 82 to 102, 117 to 137, 150 to 168, and 170 to 190; these read LNFF…SHII, GFPA…FFVW, VIAF…FLKF, VLTK…FSIL, EDAF…YTMW, and VFNG…IVFY.

The protein belongs to the PlsY family. In terms of assembly, probably interacts with PlsX.

The protein resides in the cell inner membrane. It catalyses the reaction an acyl phosphate + sn-glycerol 3-phosphate = a 1-acyl-sn-glycero-3-phosphate + phosphate. It participates in lipid metabolism; phospholipid metabolism. In terms of biological role, catalyzes the transfer of an acyl group from acyl-phosphate (acyl-PO(4)) to glycerol-3-phosphate (G3P) to form lysophosphatidic acid (LPA). This enzyme utilizes acyl-phosphate as fatty acyl donor, but not acyl-CoA or acyl-ACP. This is Glycerol-3-phosphate acyltransferase 1 from Thermotoga maritima (strain ATCC 43589 / DSM 3109 / JCM 10099 / NBRC 100826 / MSB8).